An 87-amino-acid polypeptide reads, in one-letter code: Putative RNase MJ1548 (87 aa).

Active-site residues include Arg65 and His70. Residues 65-72 carry the RX(4)HXY motif motif; that stretch reads RNAIVHKY. An O-di-AMP-tyrosine modification is found at Tyr72.

It belongs to the HepT RNase toxin family. Homodimer, probably forms a complex with cognate antitoxin MJ1547. Modified by cognate antitoxin MJ1547; probably at least 2 successive AMPylation events occur on Tyr-72.

In terms of biological role, probable toxic component of a putative type VII toxin-antitoxin (TA) system, probably an RNase. Probably neutralized by cognate antitoxin MJ1547. Neutralization may be due to AMPylation by antitoxin MJ1547. The protein is Putative RNase MJ1548 of Methanocaldococcus jannaschii (strain ATCC 43067 / DSM 2661 / JAL-1 / JCM 10045 / NBRC 100440) (Methanococcus jannaschii).